The primary structure comprises 453 residues: Bifunctional protein GlmU (453 aa).

The tract at residues 1-225 (MNIVILAAGT…EWETLGVNSK (225 aa)) is pyrophosphorylase. UDP-N-acetyl-alpha-D-glucosamine is bound by residues 6 to 9 (LAAG), lysine 20, glutamine 71, 76 to 77 (GT), 98 to 100 (YGD), glycine 135, glutamate 150, asparagine 165, and asparagine 223. Aspartate 100 contacts Mg(2+). A Mg(2+)-binding site is contributed by asparagine 223. The segment at 226 to 246 (QQLAELERIHQRNVADDLLVA) is linker. The N-acetyltransferase stretch occupies residues 247-453 (GVTIADPARI…GYVRPTKKKS (207 aa)). 2 residues coordinate UDP-N-acetyl-alpha-D-glucosamine: arginine 329 and lysine 347. Histidine 359 serves as the catalytic Proton acceptor. UDP-N-acetyl-alpha-D-glucosamine contacts are provided by tyrosine 362 and asparagine 373. Acetyl-CoA-binding positions include alanine 376, 382-383 (NY), serine 401, and alanine 419.

This sequence in the N-terminal section; belongs to the N-acetylglucosamine-1-phosphate uridyltransferase family. It in the C-terminal section; belongs to the transferase hexapeptide repeat family. Homotrimer. Mg(2+) serves as cofactor.

It is found in the cytoplasm. The enzyme catalyses alpha-D-glucosamine 1-phosphate + acetyl-CoA = N-acetyl-alpha-D-glucosamine 1-phosphate + CoA + H(+). It carries out the reaction N-acetyl-alpha-D-glucosamine 1-phosphate + UTP + H(+) = UDP-N-acetyl-alpha-D-glucosamine + diphosphate. It participates in nucleotide-sugar biosynthesis; UDP-N-acetyl-alpha-D-glucosamine biosynthesis; N-acetyl-alpha-D-glucosamine 1-phosphate from alpha-D-glucosamine 6-phosphate (route II): step 2/2. It functions in the pathway nucleotide-sugar biosynthesis; UDP-N-acetyl-alpha-D-glucosamine biosynthesis; UDP-N-acetyl-alpha-D-glucosamine from N-acetyl-alpha-D-glucosamine 1-phosphate: step 1/1. Its pathway is bacterial outer membrane biogenesis; LPS lipid A biosynthesis. In terms of biological role, catalyzes the last two sequential reactions in the de novo biosynthetic pathway for UDP-N-acetylglucosamine (UDP-GlcNAc). The C-terminal domain catalyzes the transfer of acetyl group from acetyl coenzyme A to glucosamine-1-phosphate (GlcN-1-P) to produce N-acetylglucosamine-1-phosphate (GlcNAc-1-P), which is converted into UDP-GlcNAc by the transfer of uridine 5-monophosphate (from uridine 5-triphosphate), a reaction catalyzed by the N-terminal domain. This is Bifunctional protein GlmU from Paraburkholderia phymatum (strain DSM 17167 / CIP 108236 / LMG 21445 / STM815) (Burkholderia phymatum).